Consider the following 431-residue polypeptide: Enolase (431 aa).

Residue Gln-167 coordinates (2R)-2-phosphoglycerate. The active-site Proton donor is the Glu-209. Residues Asp-246, Glu-290, and Asp-316 each coordinate Mg(2+). Positions 341, 370, 371, and 392 each coordinate (2R)-2-phosphoglycerate. Lys-341 functions as the Proton acceptor in the catalytic mechanism.

This sequence belongs to the enolase family. In terms of assembly, component of the RNA degradosome, a multiprotein complex involved in RNA processing and mRNA degradation. The cofactor is Mg(2+).

It localises to the cytoplasm. The protein resides in the secreted. The protein localises to the cell surface. The enzyme catalyses (2R)-2-phosphoglycerate = phosphoenolpyruvate + H2O. The protein operates within carbohydrate degradation; glycolysis; pyruvate from D-glyceraldehyde 3-phosphate: step 4/5. Functionally, catalyzes the reversible conversion of 2-phosphoglycerate (2-PG) into phosphoenolpyruvate (PEP). It is essential for the degradation of carbohydrates via glycolysis. The protein is Enolase of Shigella flexneri serotype 5b (strain 8401).